We begin with the raw amino-acid sequence, 198 residues long: RNA-free ribonuclease P (198 aa).

This sequence belongs to the HARP family.

It carries out the reaction Endonucleolytic cleavage of RNA, removing 5'-extranucleotides from tRNA precursor.. RNA-free RNase P that catalyzes the removal of the 5'-leader sequence from pre-tRNA to produce the mature 5'-terminus. This Nitrosococcus oceani (strain ATCC 19707 / BCRC 17464 / JCM 30415 / NCIMB 11848 / C-107) protein is RNA-free ribonuclease P.